The primary structure comprises 205 residues: Thymidylate kinase (205 aa).

ATP is bound at residue 11–18 (GVEGAGKS).

This sequence belongs to the thymidylate kinase family.

The catalysed reaction is dTMP + ATP = dTDP + ADP. Its function is as follows. Phosphorylation of dTMP to form dTDP in both de novo and salvage pathways of dTTP synthesis. The chain is Thymidylate kinase from Vesicomyosocius okutanii subsp. Calyptogena okutanii (strain HA).